Here is a 374-residue protein sequence, read N- to C-terminus: Tomoregulin-2 (374 aa).

Residues 1–40 (MVLWESPRQCSSWTLCEGFCWLLLLPVTLLIIARPVKLAA) form the signal peptide. Residues 41 to 320 (FPTSLSDCQT…VPGPVRFQYV (280 aa)) are Extracellular-facing. N-linked (GlcNAc...) asparagine glycosylation is present at N55. 2 Kazal-like domains span residues 90–137 (VCQF…SCAT) and 181–229 (VCNI…RCQD). Disulfide bonds link C91-C121, C95-C114, C103-C135, C182-C213, C186-C206, and C195-C227. The N-linked (GlcNAc...) asparagine glycan is linked to N230. An EGF-like domain is found at 261 to 301 (HHIPCPEHYNGFCMHGKCEHSINMQEPSCRCDAGYTGQHCE). Cystine bridges form between C265–C278, C273–C289, and C291–C300. The required for shedding stretch occupies residues 303-320 (KDYSVLYVVPGPVRFQYV). Residues 321–341 (LIAAVIGTIQIAVICVVVLCI) traverse the membrane as a helical segment. The Cytoplasmic portion of the chain corresponds to 342-374 (TRKCPRSNRIHRQKQNTGHYSSDNTTRASTRLI). Residues 353 to 374 (RQKQNTGHYSSDNTTRASTRLI) form a disordered region. A compositionally biased stretch (polar residues) spans 356-374 (QNTGHYSSDNTTRASTRLI).

Belongs to the tomoregulin family. In terms of processing, O-glycosylated; contains chondroitin sulfate glycosaminoglycans. Post-translationally, a soluble form (TMEFF2-ECD) is produced by proteolytic shedding. This shedding can be induced by phorbol ester or pro-inflammatory cytokines such as TNFalpha, and is mediated by a metalloproteinase ADAM. As to expression, widely expressed in the brain. In the olfactory bulb expressed in mitral cell, granule, and glomerular layers. In the hippocampus expressed in hippocampal cornu ammonis, pyramidal layer, dentate gyrus, and substantia nigra pars compacta.

The protein localises to the membrane. May be a survival factor for hippocampal and mesencephalic neurons. The shedded form may up-regulate cell proliferation. The protein is Tomoregulin-2 (Tmeff2) of Mus musculus (Mouse).